The following is a 374-amino-acid chain: Ribosomal RNA large subunit methyltransferase G (374 aa).

It belongs to the methyltransferase superfamily. RlmG family.

It localises to the cytoplasm. The catalysed reaction is guanosine(1835) in 23S rRNA + S-adenosyl-L-methionine = N(2)-methylguanosine(1835) in 23S rRNA + S-adenosyl-L-homocysteine + H(+). Functionally, specifically methylates the guanine in position 1835 (m2G1835) of 23S rRNA. This chain is Ribosomal RNA large subunit methyltransferase G, found in Pseudomonas putida (strain ATCC 47054 / DSM 6125 / CFBP 8728 / NCIMB 11950 / KT2440).